We begin with the raw amino-acid sequence, 426 residues long: Ubiquitin carboxyl-terminal hydrolase 46 (426 aa).

G2 carries the N-myristoyl glycine lipid modification. The USP domain occupies 27 to 406; that stretch reads YGLVNFGNTC…SAYILFYQAR (380 aa). Catalysis depends on C36, which acts as the Nucleophile. The disordered stretch occupies residues 162–181; it reads TAGLPRSDEKGTSERNGGIT. H342 serves as the catalytic Proton acceptor.

This sequence belongs to the peptidase C19 family. As to quaternary structure, interacts with wdr-20 and wdr-48; the catalytic activity of usp-46 is increased in the presence of both wdr-20 and wdr-48. Interacts with glr-1; the interaction results in deubiquitination of glr-1. In terms of tissue distribution, expressed in a number of tissues including the nervous system, pharynx, body wall muscle, vulva muscle and intestine and is detected in many head and ventral cord neurons.

It localises to the perikaryon. It is found in the cytoplasm. It carries out the reaction Thiol-dependent hydrolysis of ester, thioester, amide, peptide and isopeptide bonds formed by the C-terminal Gly of ubiquitin (a 76-residue protein attached to proteins as an intracellular targeting signal).. Regulates the abundance of the glr-1 glutamate receptor in the ventral nerve cord by promoting its deubiquitination and preventing its degradation in the lysosome. Contributes to the regulation of embryonic polarity. This is Ubiquitin carboxyl-terminal hydrolase 46 (usp-46) from Caenorhabditis elegans.